A 426-amino-acid chain; its full sequence is Putative phosphate permease CT_962 (426 aa).

11 consecutive transmembrane segments (helical) span residues Met1–Ala21, Leu37–Leu57, Val83–Cys103, Gly104–Leu124, Val140–Ile160, Ala183–Ile203, Pro207–Ile227, Leu260–Ala280, Val309–Gly329, Leu365–Ala385, and Ile399–Leu419.

This sequence belongs to the inorganic phosphate transporter (PiT) (TC 2.A.20) family.

Its subcellular location is the cell membrane. Functionally, potential transporter for phosphate. The sequence is that of Putative phosphate permease CT_962 from Chlamydia trachomatis serovar D (strain ATCC VR-885 / DSM 19411 / UW-3/Cx).